We begin with the raw amino-acid sequence, 414 residues long: Putative F-box/kelch-repeat protein At1g20940 (414 aa).

Residues 13-65 enclose the F-box domain; the sequence is SSIINDLPLDLLDEILFRLEPKSMAMMRCTNNSIKSYLSDPRFGPEYPSWVRP. Kelch repeat units follow at residues 281–328 and 331–378; these read LTLI…MYDG and LVVR…KLTP.

Interacts with DEK3.

The protein operates within protein modification; protein ubiquitination. Functionally, probable component of an E3 ubiquitin ligase complex. This Arabidopsis thaliana (Mouse-ear cress) protein is Putative F-box/kelch-repeat protein At1g20940.